A 182-amino-acid chain; its full sequence is Probable pyruvoyl-dependent arginine decarboxylase (182 aa).

The residue at position 43 (Ser43) is a Pyruvic acid (Ser).

The protein belongs to the PdaD family. Pyruvate is required as a cofactor.

It catalyses the reaction L-arginine + H(+) = agmatine + CO2. In Chloroherpeton thalassium (strain ATCC 35110 / GB-78), this protein is Probable pyruvoyl-dependent arginine decarboxylase.